The sequence spans 231 residues: Endo-1,4-beta-xylanase 4 (231 aa).

A signal peptide spans 1–18 (MVSFTTILVAATAALVAA). The region spanning 42–230 (GGTPSSTGTH…SSGSSTVTIQ (189 aa)) is the GH11 domain. N-linked (GlcNAc...) asparagine glycosylation is present at Asn99. The active-site Nucleophile is the Glu126. Glu217 (proton donor) is an active-site residue.

This sequence belongs to the glycosyl hydrolase 11 (cellulase G) family.

It is found in the secreted. It carries out the reaction Endohydrolysis of (1-&gt;4)-beta-D-xylosidic linkages in xylans.. It participates in glycan degradation; xylan degradation. Endo-1,4-beta-xylanase involved in the hydrolysis of xylan, a major structural heterogeneous polysaccharide found in plant biomass representing the second most abundant polysaccharide in the biosphere, after cellulose. This chain is Endo-1,4-beta-xylanase 4 (XYL4), found in Pyricularia grisea (Crabgrass-specific blast fungus).